Reading from the N-terminus, the 150-residue chain is Large ribosomal subunit protein uL13 (150 aa).

Positions 130–150 (EHPHSAQNPQVLSITTNELVK) are disordered. Residues 134 to 150 (SAQNPQVLSITTNELVK) are compositionally biased toward polar residues.

The protein belongs to the universal ribosomal protein uL13 family. Part of the 50S ribosomal subunit.

Functionally, this protein is one of the early assembly proteins of the 50S ribosomal subunit, although it is not seen to bind rRNA by itself. It is important during the early stages of 50S assembly. The chain is Large ribosomal subunit protein uL13 from Prochlorococcus marinus (strain SARG / CCMP1375 / SS120).